The chain runs to 82 residues: Three-finger toxin MALT0063C (82 aa).

A signal peptide spans 1–21 (MRTLLLTLVVVTIVCLDLGNS). Intrachain disulfides connect Cys-24–Cys-42, Cys-35–Cys-60, Cys-64–Cys-72, and Cys-73–Cys-78.

This sequence belongs to the three-finger toxin family. Short-chain subfamily. In terms of tissue distribution, expressed by the venom gland.

The protein resides in the secreted. The polypeptide is Three-finger toxin MALT0063C (Micrurus altirostris (Uruguayan coral snake)).